We begin with the raw amino-acid sequence, 105 residues long: Small ribosomal subunit protein uS10 (105 aa).

Belongs to the universal ribosomal protein uS10 family. As to quaternary structure, part of the 30S ribosomal subunit.

Involved in the binding of tRNA to the ribosomes. The sequence is that of Small ribosomal subunit protein uS10 from Francisella philomiragia subsp. philomiragia (strain ATCC 25017 / CCUG 19701 / FSC 153 / O#319-036).